We begin with the raw amino-acid sequence, 185 residues long: Ribosome-recycling factor (185 aa).

Belongs to the RRF family.

It is found in the cytoplasm. In terms of biological role, responsible for the release of ribosomes from messenger RNA at the termination of protein biosynthesis. May increase the efficiency of translation by recycling ribosomes from one round of translation to another. The protein is Ribosome-recycling factor of Helicobacter hepaticus (strain ATCC 51449 / 3B1).